The primary structure comprises 397 residues: Tryptophan synthase beta chain (397 aa).

An N6-(pyridoxal phosphate)lysine modification is found at lysine 87.

This sequence belongs to the TrpB family. As to quaternary structure, tetramer of two alpha and two beta chains. Requires pyridoxal 5'-phosphate as cofactor.

The enzyme catalyses (1S,2R)-1-C-(indol-3-yl)glycerol 3-phosphate + L-serine = D-glyceraldehyde 3-phosphate + L-tryptophan + H2O. It participates in amino-acid biosynthesis; L-tryptophan biosynthesis; L-tryptophan from chorismate: step 5/5. The beta subunit is responsible for the synthesis of L-tryptophan from indole and L-serine. The protein is Tryptophan synthase beta chain of Escherichia fergusonii (strain ATCC 35469 / DSM 13698 / CCUG 18766 / IAM 14443 / JCM 21226 / LMG 7866 / NBRC 102419 / NCTC 12128 / CDC 0568-73).